The sequence spans 249 residues: MAARKAMVAGNWKMNGSLELVKQMSDAINNVKSNEIDIVLFPPFPLVSAMIASGVSTGTQTVSENTPGAFTGEVDAQLIKELGAQYVLVGHSERRSIYKESNDVVAAKFARAQQVGLTPILCVGESESEQENGKTEQIVAAQIDAVIEKLGVAALKDSVIAYEPVWAIGTGKTASPEQAQSVHKFIRDKIASLNSDLAQGLTILYGGSVNEKNSELLFAQTDIDGGLIGGASLKADSFTAICNSAKGTV.

Residue 11–13 participates in substrate binding; it reads NWK. His-91 (electrophile) is an active-site residue. The active-site Proton acceptor is the Glu-163. Substrate contacts are provided by residues Gly-169, Ser-208, and 229-230; that span reads GG.

The protein belongs to the triosephosphate isomerase family. In terms of assembly, homodimer.

The protein localises to the cytoplasm. It catalyses the reaction D-glyceraldehyde 3-phosphate = dihydroxyacetone phosphate. It participates in carbohydrate biosynthesis; gluconeogenesis. The protein operates within carbohydrate degradation; glycolysis; D-glyceraldehyde 3-phosphate from glycerone phosphate: step 1/1. Functionally, involved in the gluconeogenesis. Catalyzes stereospecifically the conversion of dihydroxyacetone phosphate (DHAP) to D-glyceraldehyde-3-phosphate (G3P). This is Triosephosphate isomerase from Pseudoalteromonas translucida (strain TAC 125).